Consider the following 119-residue polypeptide: MAEADDGGNGDGATAGDCYAHHHYRDVKLARDASENIDSISSLPDVILQQILSSLPTNLAIRTSVLSTRWRHVWSDTPYIYFDGPGTLYRGLKADTINKTLARYKLPKIMSFHLYTKIF.

In terms of domain architecture, F-box spans 37-92 (IDSISSLPDVILQQILSSLPTNLAIRTSVLSTRWRHVWSDTPYIYFDGPGTLYRGL).

This chain is Putative F-box protein At2g39415, found in Arabidopsis thaliana (Mouse-ear cress).